The primary structure comprises 648 residues: MSWLFGVNKGPKGEGAGPPPPLPPAQPGAEGGGDRGLGDRPAPKDKWSNFDPTGLERAAKAARELEHSRYAKEALNLAQMQEQTLQLEQQSKLKEYEAAVEQLKSEQIRAQAEERRKTLSEETRQHQARAQYQDKLARQRYEDQLKQQQLLNEENLRKQEESVQKQEAMRRATVEREMELRHKNEMLRVETEARARAKAERENADIIREQIRLKASEHRQTVLESIRTAGTLFGEGFRAFVTDRDKVTATVAGLTLLAVGVYSAKNATAVTGRFIEARLGKPSLVRETSRITVLEALRHPIQVSRRLLSRPQDVLEGVVLSPSLEARVRDIAIATRNTKKNRGLYRHILLYGPPGTGKTLFAKKLALHSGMDYAIMTGGDVAPMGREGVTAMHKLFDWANTSRRGLLLFMDEADAFLRKRATEEISKDLRATLNAFLYHMGQHSNKFMLVLASNLPEQFDCAINSRIDVMVHFDLPQQEERERLVRLHFDNCVLKPATEGKRRLKLAQFDYGRKCSEVARLTEGMSGREIAQLAVSWQATAYASKDGVLTEAMMDACVQDAVQQYRQKMRWLKAEGPGRGVEHPLSGVQGETLTSWSLATDPSYPCLAGPCTFRICSWMGTGLCPGPLSPRMSCGGGRPFCPPGHPLL.

Disordered stretches follow at residues 1–54 (MSWL…DPTG) and 111–134 (QAEERRKTLSEETRQHQARAQYQD). Position 2 is an N-acetylserine (Ser-2). Over 2-246 (SWLFGVNKGP…FRAFVTDRDK (245 aa)) the chain is Mitochondrial intermembrane. A compositionally biased stretch (pro residues) spans 17–26 (GPPPPLPPAQ). Composition is skewed to basic and acidic residues over residues 32-48 (GGDRGLGDRPAPKDKWS) and 111-125 (QAEERRKTLSEETRQ). The stretch at 69 to 214 (RYAKEALNLA…DIIREQIRLK (146 aa)) forms a coiled coil. The helical intramembrane region spans 247–264 (VTATVAGLTLLAVGVYSA). Topologically, residues 265-648 (KNATAVTGRF…PFCPPGHPLL (384 aa)) are mitochondrial intermembrane. 352–359 (GPPGTGKT) provides a ligand contact to ATP. An N6-acetyllysine mark is found at Lys-427 and Lys-495.

This sequence belongs to the AAA ATPase family. In terms of assembly, forms heterooligomers with ATAD3A. Interacts with components of the mitochondrial ribosome, including MRPL11 and MRPS18B, and with other proteins involved in mitochondrial RNA metabolism, possibly via interaction with ATAD3A. Interacts with GADD45GIP1. As to expression, tends to be down-regulated in differentiated cells and re-expressed in pluripotent stem cells or cancer cells (at protein level).

The protein localises to the mitochondrion inner membrane. May play a role in a mitochondrial network organization typical for stem cells, characterized by reduced mitochondrial metabolism, low mtDNA copies and fragmentated mitochondrial network. May act by suppressing ATAD3A function, interfering with ATAD3A interaction with matrix nucleoid complexes. The polypeptide is ATPase family AAA domain-containing protein 3B (ATAD3B) (Homo sapiens (Human)).